Consider the following 370-residue polypeptide: Vasopressin V2 receptor (370 aa).

A disordered region spans residues 1 to 28 (MLRATTSAVPRALSWPAAPGNGSEREPL). The Extracellular portion of the chain corresponds to 1-37 (MLRATTSAVPRALSWPAAPGNGSEREPLDDRDPLLAR). N-linked (GlcNAc...) asparagine glycosylation occurs at N21. Residues 38 to 62 (VELALLSTVFVAVALSNGLVLGALV) form a helical membrane-spanning segment. Over 63 to 76 (RRGRRGRWAPMHVF) the chain is Cytoplasmic. A helical membrane pass occupies residues 77 to 97 (IGHLCLADLAVALFQVLPQLA). The Extracellular portion of the chain corresponds to 98–112 (WDATYRFRGPDALCR). A helical membrane pass occupies residues 113 to 134 (AVKYLQMVGMYASSYMILAMTL). The Cytoplasmic portion of the chain corresponds to 135-158 (DRHRAICRPMLAYRHGGGARWNRP). The chain crosses the membrane as a helical span at residues 159–179 (VLVAWAFSLLLSLPQLFIFAQ). The Extracellular segment spans residues 180-199 (RDVGDGSGVLDCWASFAEPW). Residues 200 to 219 (GLRAYVTWIALMVFVAPALG) traverse the membrane as a helical segment. The Cytoplasmic portion of the chain corresponds to 220–270 (IAACQVLIFREIHTSLVPGPAERAGGHRGGRRAGSPREGARVSAAMAKTAR). A helical membrane pass occupies residues 271-292 (MTLVIVAVYVLCWAPFFLVQLW). The Extracellular portion of the chain corresponds to 293-307 (SVWDPKAPREGPPFV). Residues 308–327 (LLMLLASLNSCTNPWIYASF) form a helical membrane-spanning segment. Over 328–370 (SSSISSELRSLLCCPRRRTPPSLRPQEESCATASSFSARDTSS) the chain is Cytoplasmic. S-palmitoyl cysteine attachment occurs at residues C340 and C341. The interval 347-370 (PPSLRPQEESCATASSFSARDTSS) is disordered. Over residues 356 to 370 (SCATASSFSARDTSS) the composition is skewed to polar residues.

This sequence belongs to the G-protein coupled receptor 1 family. Vasopressin/oxytocin receptor subfamily. In terms of assembly, interacts with ARRDC4. Identified in a complex containing at least ARRDC4, V2R and HGS. Interacts with TMEM147.

It localises to the cell membrane. Functionally, receptor for arginine vasopressin. The activity of this receptor is mediated by G proteins which activate adenylate cyclase. Involved in renal water reabsorption. In Sus scrofa (Pig), this protein is Vasopressin V2 receptor (AVPR2).